We begin with the raw amino-acid sequence, 775 residues long: Dipeptidyl peptidase 4 (775 aa).

The signal sequence occupies residues 1-15 (MKLLSLLMLAGIAQA). Residues Asn81, Asn111, Asn170, and Asn219 are each glycosylated (N-linked (GlcNAc...) asparagine). Active-site charge relay system residues include Ser613, Asp690, and His725.

This sequence belongs to the peptidase S9B family.

It is found in the secreted. The catalysed reaction is Release of an N-terminal dipeptide, Xaa-Yaa-|-Zaa-, from a polypeptide, preferentially when Yaa is Pro, provided Zaa is neither Pro nor hydroxyproline.. Its function is as follows. Extracellular dipeptidyl-peptidase which removes N-terminal dipeptides sequentially from polypeptides having unsubstituted N-termini provided that the penultimate residue is proline. Contributes to pathogenicity. The protein is Dipeptidyl peptidase 4 (DPP4) of Trichophyton tonsurans (Scalp ringworm fungus).